Consider the following 777-residue polypeptide: 1,4-alpha-glucan branching enzyme GlgB (777 aa).

Asp-408 functions as the Nucleophile in the catalytic mechanism. The Proton donor role is filled by Glu-461.

The protein belongs to the glycosyl hydrolase 13 family. GlgB subfamily. In terms of assembly, monomer.

It catalyses the reaction Transfers a segment of a (1-&gt;4)-alpha-D-glucan chain to a primary hydroxy group in a similar glucan chain.. It participates in glycan biosynthesis; glycogen biosynthesis. Its function is as follows. Catalyzes the formation of the alpha-1,6-glucosidic linkages in glycogen by scission of a 1,4-alpha-linked oligosaccharide from growing alpha-1,4-glucan chains and the subsequent attachment of the oligosaccharide to the alpha-1,6 position. This Actinobacillus pleuropneumoniae serotype 3 (strain JL03) protein is 1,4-alpha-glucan branching enzyme GlgB.